The primary structure comprises 356 residues: Leucoanthocyanidin dioxygenase (356 aa).

Substrate is bound by residues Tyr142 and Lys213. Residues 208–307 enclose the Fe2OG dioxygenase domain; it reads LLLQMKINYY…RISWAVFCEP (100 aa). 215-217 serves as a coordination point for 2-oxoglutarate; the sequence is NYY. Position 232 (His232) interacts with Fe cation. Thr233 lines the substrate pocket. Residues Asp234 and His288 each coordinate Fe cation. A 2-oxoglutarate-binding site is contributed by 298 to 300; that stretch reads RIS. Residues Glu306 and Lys341 each coordinate substrate.

This sequence belongs to the iron/ascorbate-dependent oxidoreductase family. Requires L-ascorbate as cofactor. The cofactor is Fe(2+). As to expression, expressed in young seedlings (at protein level).

The enzyme catalyses a (2R,3S,4S)-leucoanthocyanidin + 2-oxoglutarate + O2 = a 4-H-anthocyanidin with a 3-hydroxy group + succinate + CO2 + 2 H2O. It catalyses the reaction (2R,3S,4S)-3,4-leucopelargonidin + 2-oxoglutarate + O2 = (4S)-2,3-dehydroleucopelargonidin + succinate + CO2 + H2O + H(+). The catalysed reaction is (2R,3S,4S)-leucocyanidin + 2-oxoglutarate + O2 = (4S)-2,3-dehydroleucocyanidin + succinate + CO2 + H2O + H(+). It participates in pigment biosynthesis; anthocyanin biosynthesis. Its function is as follows. Involved in anthocyanin and protoanthocyanidin biosynthesis by catalyzing the oxidation of leucoanthocyanidins into anthocyanidins. Possesses low flavonol synthase activity in vitro towards dihydrokaempferol and dihydroquercetin producing kaempferol and quercitin, respectively. The polypeptide is Leucoanthocyanidin dioxygenase (LDOX) (Arabidopsis thaliana (Mouse-ear cress)).